A 904-amino-acid chain; its full sequence is Copper-transporting ATPase ccc2 (904 aa).

Over methionine 1–arginine 172 the chain is Cytoplasmic. The 67-residue stretch at tyrosine 2 to serine 68 folds into the HMA domain. Cu(+)-binding residues include cysteine 13 and cysteine 16. A helical transmembrane segment spans residues phenylalanine 173 to cysteine 193. Residues aspartate 194–arginine 197 are Lumenal, vesicle-facing. A helical membrane pass occupies residues alanine 198–leucine 218. Residues serine 219–aspartate 246 lie on the Cytoplasmic side of the membrane. Residues valine 247–tyrosine 267 form a helical membrane-spanning segment. The Lumenal, vesicle portion of the chain corresponds to serine 268 to isoleucine 278. Residues phenylalanine 279–leucine 296 traverse the membrane as a helical segment. The Cytoplasmic portion of the chain corresponds to glutamate 297–alanine 431. The helical transmembrane segment at glycine 432–phenylalanine 452 threads the bilayer. The Lumenal, vesicle portion of the chain corresponds to threonine 453–lysine 469. A helical membrane pass occupies residues phenylalanine 470–glycine 490. Residues leucine 491–cysteine 805 are Cytoplasmic-facing. Aspartate 529 serves as the catalytic 4-aspartylphosphate intermediate. Positions 742 and 746 each coordinate Mg(2+). Residues isoleucine 806 to leucine 826 form a helical membrane-spanning segment. The Lumenal, vesicle segment spans residues asparagine 827–proline 828. A helical transmembrane segment spans residues methionine 829–leucine 849. Residues arginine 850–valine 904 are Cytoplasmic-facing.

It belongs to the cation transport ATPase (P-type) (TC 3.A.3) family. Type IB subfamily.

The protein localises to the golgi apparatus. Its subcellular location is the trans-Golgi network membrane. The enzyme catalyses Cu(+)(in) + ATP + H2O = Cu(+)(out) + ADP + phosphate + H(+). In terms of biological role, probably involved in copper transport and in the regulation of cellular copper level. Retrieves copper from the metallochaperone atx1 and incorporates it into trans-Golgi vesicles. The polypeptide is Copper-transporting ATPase ccc2 (ccc2) (Schizosaccharomyces pombe (strain 972 / ATCC 24843) (Fission yeast)).